Reading from the N-terminus, the 235-residue chain is MOB kinase activator 2 (235 aa).

The segment at 1–22 is disordered; sequence MDWLMGKSKAKPNGKKPAAEEK. Positions 78, 83, 157, and 162 each coordinate Zn(2+). The interval 213–235 is disordered; that stretch reads NSGATGDGANSGASGAQNHVKER.

The protein belongs to the MOB1/phocein family. As to quaternary structure, binds STK38 and STK38L. Post-translationally, phosphorylated.

The protein resides in the nucleus. It localises to the cytoplasm. It is found in the perinuclear region. Functionally, stimulates the autophosphorylation and kinase activity of STK38 and STK38L. The polypeptide is MOB kinase activator 2 (Mob2) (Mus musculus (Mouse)).